The following is a 341-amino-acid chain: Methionine import ATP-binding protein MetN (341 aa).

An ABC transporter domain is found at 2–241 (IELNQIVKRY…PQHDVTKRFV (240 aa)). 38-45 (GFSGAGKS) contacts ATP.

It belongs to the ABC transporter superfamily. Methionine importer (TC 3.A.1.24) family. In terms of assembly, the complex is composed of two ATP-binding proteins (MetN), two transmembrane proteins (MetI) and a solute-binding protein (MetQ).

It localises to the cell membrane. It catalyses the reaction L-methionine(out) + ATP + H2O = L-methionine(in) + ADP + phosphate + H(+). The enzyme catalyses D-methionine(out) + ATP + H2O = D-methionine(in) + ADP + phosphate + H(+). In terms of biological role, part of the ABC transporter complex MetNIQ involved in methionine import. Responsible for energy coupling to the transport system. The chain is Methionine import ATP-binding protein MetN from Staphylococcus saprophyticus subsp. saprophyticus (strain ATCC 15305 / DSM 20229 / NCIMB 8711 / NCTC 7292 / S-41).